The following is a 180-amino-acid chain: ATP-dependent protease subunit HslV (180 aa).

Residue Thr7 is part of the active site. Residues Gly165, Cys168, and Thr171 each contribute to the Na(+) site.

This sequence belongs to the peptidase T1B family. HslV subfamily. A double ring-shaped homohexamer of HslV is capped on each side by a ring-shaped HslU homohexamer. The assembly of the HslU/HslV complex is dependent on binding of ATP.

It is found in the cytoplasm. It carries out the reaction ATP-dependent cleavage of peptide bonds with broad specificity.. With respect to regulation, allosterically activated by HslU binding. Protease subunit of a proteasome-like degradation complex believed to be a general protein degrading machinery. The protein is ATP-dependent protease subunit HslV of Bacillus cytotoxicus (strain DSM 22905 / CIP 110041 / 391-98 / NVH 391-98).